A 184-amino-acid polypeptide reads, in one-letter code: Protein GrpE (184 aa).

Positions 1–12 are enriched in basic and acidic residues; that stretch reads MADEQLNEKDLN. Residues 1-22 form a disordered region; it reads MADEQLNEKDLNAEEAGAVDNG.

It belongs to the GrpE family. As to quaternary structure, homodimer.

The protein resides in the cytoplasm. In terms of biological role, participates actively in the response to hyperosmotic and heat shock by preventing the aggregation of stress-denatured proteins, in association with DnaK and GrpE. It is the nucleotide exchange factor for DnaK and may function as a thermosensor. Unfolded proteins bind initially to DnaJ; upon interaction with the DnaJ-bound protein, DnaK hydrolyzes its bound ATP, resulting in the formation of a stable complex. GrpE releases ADP from DnaK; ATP binding to DnaK triggers the release of the substrate protein, thus completing the reaction cycle. Several rounds of ATP-dependent interactions between DnaJ, DnaK and GrpE are required for fully efficient folding. The sequence is that of Protein GrpE from Pseudomonas putida (strain W619).